A 527-amino-acid polypeptide reads, in one-letter code: MASDFLPVRRALLSVSDKTGLIDLARALVARNVELLSTGGTAKAIREAGLPVKDVAELTGFPEMMDGRVKTLHPLVHGGLLGRAGIDEAVMAEHGIAPIDLLVLNLYPFESVTVKTDCTLADAVENIDIGGPAMLRSAAKNFARVAVATDPAQYADLLAELEANNGQLSAAKRFALSVAAFNRVAQYDAAISNYLSAVADSAETVPTRNPFPAQINSNFVKVMDLRYGENPHQSGAFYRDLYPVPGTLATFQQLQGKELSYNNLADADAAWECVRQFDAPACVIVKHANPCGVAVGAGCGDAYELAYATDPTSAFGGILAFNKTLDAATAKAILDRQFVEVLIAPDYDAGALDYATKKANVRVLKIPHGNGLNNYDTKRIGSGLLMQSADNRGMSLGELSVVTQRAPSEAELGDLLFAWRVAKYVKSNAIVYAKDSRTIGVGAGQMSRVVSAKIAALKAEEAKLTVVGSVMASDAFFPFRDGIDAAASAGIQAVIQPGGSMRDGEVIAAADEHGIAMVFTGVRHFRH.

The region spanning 1–149 (MASDFLPVRR…KNFARVAVAT (149 aa)) is the MGS-like domain.

Belongs to the PurH family.

It catalyses the reaction (6R)-10-formyltetrahydrofolate + 5-amino-1-(5-phospho-beta-D-ribosyl)imidazole-4-carboxamide = 5-formamido-1-(5-phospho-D-ribosyl)imidazole-4-carboxamide + (6S)-5,6,7,8-tetrahydrofolate. It carries out the reaction IMP + H2O = 5-formamido-1-(5-phospho-D-ribosyl)imidazole-4-carboxamide. The protein operates within purine metabolism; IMP biosynthesis via de novo pathway; 5-formamido-1-(5-phospho-D-ribosyl)imidazole-4-carboxamide from 5-amino-1-(5-phospho-D-ribosyl)imidazole-4-carboxamide (10-formyl THF route): step 1/1. It participates in purine metabolism; IMP biosynthesis via de novo pathway; IMP from 5-formamido-1-(5-phospho-D-ribosyl)imidazole-4-carboxamide: step 1/1. This chain is Bifunctional purine biosynthesis protein PurH, found in Xanthomonas oryzae pv. oryzae (strain KACC10331 / KXO85).